A 281-amino-acid chain; its full sequence is Putative zinc-binding protein ORF11 (281 aa).

This is Putative zinc-binding protein ORF11 (ORF11) from Ictaluridae (bullhead catfishes).